The following is a 237-amino-acid chain: Large ribosomal subunit protein uL3 (237 aa).

2 disordered regions span residues 133–155 and 213–237; these read ASHG…DPGK and PENA…EGAE. Residues 135 to 150 are compositionally biased toward polar residues; sequence HGNSITHRSHGSTGQR. The residue at position 151 (Gln-151) is an N5-methylglutamine. Low complexity predominate over residues 220-237; sequence AGLRAGAKAEAAATEGAE.

This sequence belongs to the universal ribosomal protein uL3 family. As to quaternary structure, part of the 50S ribosomal subunit. Forms a cluster with proteins L14 and L19. Post-translationally, methylated by PrmB.

Its function is as follows. One of the primary rRNA binding proteins, it binds directly near the 3'-end of the 23S rRNA, where it nucleates assembly of the 50S subunit. The polypeptide is Large ribosomal subunit protein uL3 (Brucella suis biovar 1 (strain 1330)).